We begin with the raw amino-acid sequence, 143 residues long: Anti-sigma F factor (143 aa).

This sequence belongs to the anti-sigma-factor family.

It carries out the reaction L-seryl-[protein] + ATP = O-phospho-L-seryl-[protein] + ADP + H(+). The catalysed reaction is L-threonyl-[protein] + ATP = O-phospho-L-threonyl-[protein] + ADP + H(+). Functionally, binds to sigma F and blocks its ability to form an RNA polymerase holoenzyme (E-sigma F). Phosphorylates SpoIIAA on a serine residue. This phosphorylation may enable SpoIIAA to act as an anti-anti-sigma factor that counteracts SpoIIAB and thus releases sigma F from inhibition. This Clostridium acetobutylicum (strain ATCC 824 / DSM 792 / JCM 1419 / IAM 19013 / LMG 5710 / NBRC 13948 / NRRL B-527 / VKM B-1787 / 2291 / W) protein is Anti-sigma F factor.